The following is a 327-amino-acid chain: Glycerol-3-phosphate dehydrogenase [NAD(P)+] (327 aa).

The NADPH site is built by W11, H30, and K103. Residues K103, G131, and S133 each contribute to the sn-glycerol 3-phosphate site. A135 lines the NADPH pocket. Sn-glycerol 3-phosphate is bound by residues K186, D243, S253, R254, and N255. Residue K186 is the Proton acceptor of the active site. R254 contributes to the NADPH binding site. NADPH contacts are provided by V281 and E283.

The protein belongs to the NAD-dependent glycerol-3-phosphate dehydrogenase family.

It is found in the cytoplasm. It catalyses the reaction sn-glycerol 3-phosphate + NAD(+) = dihydroxyacetone phosphate + NADH + H(+). The catalysed reaction is sn-glycerol 3-phosphate + NADP(+) = dihydroxyacetone phosphate + NADPH + H(+). It participates in membrane lipid metabolism; glycerophospholipid metabolism. Catalyzes the reduction of the glycolytic intermediate dihydroxyacetone phosphate (DHAP) to sn-glycerol 3-phosphate (G3P), the key precursor for phospholipid synthesis. The protein is Glycerol-3-phosphate dehydrogenase [NAD(P)+] of Wolbachia sp. subsp. Brugia malayi (strain TRS).